The sequence spans 143 residues: Large ribosomal subunit protein uL15 (143 aa).

The disordered stretch occupies residues 1–52 (MKLNTLAPAAGSKSAPKRLGRGIGSGLGKTSGKGHKGQKARSGGYHKVGFEG). Over residues 21 to 31 (RGIGSGLGKTS) the composition is skewed to gly residues.

It belongs to the universal ribosomal protein uL15 family. As to quaternary structure, part of the 50S ribosomal subunit.

Binds to the 23S rRNA. In Francisella tularensis subsp. holarctica (strain FTNF002-00 / FTA), this protein is Large ribosomal subunit protein uL15.